A 118-amino-acid chain; its full sequence is Immunoglobulin heavy variable 3-9 (118 aa).

Residues 1 to 19 (MELGLSWIFLLAILKGVQC) form the signal peptide. The framework-1 stretch occupies residues 20-44 (EVQLVESGGGLVQPGRSLRLSCAAS). The Ig-like domain maps to 20–118 (EVQLVESGGG…DTALYYCAKD (99 aa)). Cysteines 41 and 115 form a disulfide. Positions 45–52 (GFTFDDYA) are complementarity-determining-1. Positions 53–69 (MHWVRQAPGKGLEWVSG) are framework-2. The tract at residues 70-77 (ISWNSGSI) is complementarity-determining-2. The tract at residues 78–115 (GYADSVKGRFTISRDNAKNSLYLQMNSLRAEDTALYYC) is framework-3. Residues 116-118 (AKD) form a complementarity-determining-3 region.

As to quaternary structure, immunoglobulins are composed of two identical heavy chains and two identical light chains; disulfide-linked.

The protein resides in the secreted. It localises to the cell membrane. V region of the variable domain of immunoglobulin heavy chains that participates in the antigen recognition. Immunoglobulins, also known as antibodies, are membrane-bound or secreted glycoproteins produced by B lymphocytes. In the recognition phase of humoral immunity, the membrane-bound immunoglobulins serve as receptors which, upon binding of a specific antigen, trigger the clonal expansion and differentiation of B lymphocytes into immunoglobulins-secreting plasma cells. Secreted immunoglobulins mediate the effector phase of humoral immunity, which results in the elimination of bound antigens. The antigen binding site is formed by the variable domain of one heavy chain, together with that of its associated light chain. Thus, each immunoglobulin has two antigen binding sites with remarkable affinity for a particular antigen. The variable domains are assembled by a process called V-(D)-J rearrangement and can then be subjected to somatic hypermutations which, after exposure to antigen and selection, allow affinity maturation for a particular antigen. This is Immunoglobulin heavy variable 3-9 from Homo sapiens (Human).